Here is a 567-residue protein sequence, read N- to C-terminus: Proline--tRNA ligase (567 aa).

It belongs to the class-II aminoacyl-tRNA synthetase family. ProS type 1 subfamily. Homodimer.

The protein resides in the cytoplasm. It catalyses the reaction tRNA(Pro) + L-proline + ATP = L-prolyl-tRNA(Pro) + AMP + diphosphate. In terms of biological role, catalyzes the attachment of proline to tRNA(Pro) in a two-step reaction: proline is first activated by ATP to form Pro-AMP and then transferred to the acceptor end of tRNA(Pro). As ProRS can inadvertently accommodate and process non-cognate amino acids such as alanine and cysteine, to avoid such errors it has two additional distinct editing activities against alanine. One activity is designated as 'pretransfer' editing and involves the tRNA(Pro)-independent hydrolysis of activated Ala-AMP. The other activity is designated 'posttransfer' editing and involves deacylation of mischarged Ala-tRNA(Pro). The misacylated Cys-tRNA(Pro) is not edited by ProRS. The sequence is that of Proline--tRNA ligase from Staphylococcus aureus (strain COL).